Reading from the N-terminus, the 947-residue chain is Protein translocase subunit SecA 1 (947 aa).

ATP contacts are provided by residues Gln83, 101-105, and Asp490; that span reads GEGKT. The disordered stretch occupies residues 860–947; sequence AKAQEQTGQG…KTSKPTRRRG (88 aa). The segment covering 925-934 has biased composition (basic and acidic residues); it reads TRRERREAAR. Over residues 935-947 the composition is skewed to basic residues; it reads KQAKTSKPTRRRG.

This sequence belongs to the SecA family. Monomer and homodimer. Part of the essential Sec protein translocation apparatus which comprises SecA, SecYEG and auxiliary proteins SecDF. Other proteins may also be involved.

The protein localises to the cell membrane. The protein resides in the cytoplasm. It carries out the reaction ATP + H2O + cellular proteinSide 1 = ADP + phosphate + cellular proteinSide 2.. Functionally, part of the Sec protein translocase complex. Interacts with the SecYEG preprotein conducting channel. Has a central role in coupling the hydrolysis of ATP to the transfer of proteins into and across the cell membrane, serving as an ATP-driven molecular motor driving the stepwise translocation of polypeptide chains across the membrane. This is Protein translocase subunit SecA 1 from Mycobacterium sp. (strain JLS).